We begin with the raw amino-acid sequence, 215 residues long: CASP-like protein 1E1 (215 aa).

The Cytoplasmic portion of the chain corresponds to 1-51 (MESSRGKPGLNGSGGGAAAFDYSSRRGYYTGAGAALPPLAAGSRAPPVDPC). A helical membrane pass occupies residues 52 to 72 (CVALRVFVLLGTLASAVVMAA). Residues 73–103 (DRQSTTVQIAAGEQLAPPLRVPVTAKWTYSS) are Extracellular-facing. The helical transmembrane segment at 104 to 124 (AFVYFVVANAMVFAFSAAALA) threads the bilayer. The Cytoplasmic segment spans residues 125–130 (AVRRRS). A helical membrane pass occupies residues 131–151 (AVVPVMVGDLVAMALLFSAVG). At 152 to 185 (AAAQFGLLGERGNAHVRWAKVCDVYGPFCERAMA) the chain is on the extracellular side. The helical transmembrane segment at 186–206 (AVVVALIAAFADLVLLMLTIL) threads the bilayer. The Cytoplasmic portion of the chain corresponds to 207 to 215 (TIHKASSYY).

Belongs to the Casparian strip membrane proteins (CASP) family. As to quaternary structure, homodimer and heterodimers.

It is found in the cell membrane. This Oryza sativa subsp. indica (Rice) protein is CASP-like protein 1E1.